A 610-amino-acid polypeptide reads, in one-letter code: DNA mismatch repair protein MutL (610 aa).

Belongs to the DNA mismatch repair MutL/HexB family.

This protein is involved in the repair of mismatches in DNA. It is required for dam-dependent methyl-directed DNA mismatch repair. May act as a 'molecular matchmaker', a protein that promotes the formation of a stable complex between two or more DNA-binding proteins in an ATP-dependent manner without itself being part of a final effector complex. This Rickettsia canadensis (strain McKiel) protein is DNA mismatch repair protein MutL.